The chain runs to 397 residues: DNA-directed RNA polymerase subunit Rpo1C (397 aa).

It belongs to the RNA polymerase beta' chain family. Part of the RNA polymerase complex.

Its subcellular location is the cytoplasm. It catalyses the reaction RNA(n) + a ribonucleoside 5'-triphosphate = RNA(n+1) + diphosphate. Its function is as follows. DNA-dependent RNA polymerase (RNAP) catalyzes the transcription of DNA into RNA using the four ribonucleoside triphosphates as substrates. Forms part of the jaw domain. The chain is DNA-directed RNA polymerase subunit Rpo1C from Halobacterium salinarum (strain ATCC 29341 / DSM 671 / R1).